The primary structure comprises 993 residues: Vinculin (993 aa).

Tandem repeats lie at residues 258–364 and 373–480. Positions 258-480 are 2 X repeats; it reads DSDNVTVMRK…LRNKLRELVD (223 aa). Positions 730-797 are disordered; sequence ITGAGGSRPP…PPPETDDEEE (68 aa). Basic and acidic residues predominate over residues 758–768; that stretch reads VHDRIYIREDI. Positions 769–790 are enriched in pro residues; that stretch reads PTPPRPPPPVEISPPPRPPPPP.

The protein belongs to the vinculin/alpha-catenin family. As to quaternary structure, exhibits self-association properties.

Its subcellular location is the cytoplasm. It is found in the cytoskeleton. The protein localises to the cell junction. The protein resides in the adherens junction. It localises to the cell membrane. Involved in cell adhesion. May be involved in the attachment of the actin-based microfilaments to the plasma membrane. This chain is Vinculin, found in Brugia malayi (Filarial nematode worm).